The following is a 417-amino-acid chain: Magnesium-protoporphyrin IX monomethyl ester [oxidative] cyclase, chloroplastic (417 aa).

A chloroplast-targeting transit peptide spans 1–45 (MASAMELSLLNPAMHHYGIAAKTASHLPVVPARRASSGAVRFRVR).

This sequence belongs to the AcsF family. Requires Fe cation as cofactor.

It localises to the plastid. Its subcellular location is the chloroplast membrane. The catalysed reaction is Mg-protoporphyrin IX 13-monomethyl ester + 3 NADPH + 3 O2 + 2 H(+) = 3,8-divinyl protochlorophyllide a + 3 NADP(+) + 5 H2O. It participates in porphyrin-containing compound metabolism; chlorophyll biosynthesis. Catalyzes the formation of the isocyclic ring in chlorophyll biosynthesis. Mediates the cyclase reaction, which results in the formation of divinylprotochlorophyllide (Pchlide) characteristic of all chlorophylls from magnesium-protoporphyrin IX 13-monomethyl ester (MgPMME). The chain is Magnesium-protoporphyrin IX monomethyl ester [oxidative] cyclase, chloroplastic (CRD1) from Hordeum vulgare (Barley).